A 452-amino-acid polypeptide reads, in one-letter code: Bifunctional protein GlmU (452 aa).

The segment at 1–225 is pyrophosphorylase; the sequence is MEVVILAAGQ…VSETLGVNSK (225 aa). UDP-N-acetyl-alpha-D-glucosamine is bound by residues 6-9, K20, Q71, 76-77, 98-100, G135, E150, N165, and N223; these read LAAG, GT, and YGD. D100 contacts Mg(2+). N223 serves as a coordination point for Mg(2+). A linker region spans residues 226-246; sequence PQLAELERIHQRNIAQRLMED. The segment at 247 to 452 is N-acetyltransferase; sequence GVTLIDPARI…AGWKRPVKQR (206 aa). UDP-N-acetyl-alpha-D-glucosamine contacts are provided by R329 and K347. H359 (proton acceptor) is an active-site residue. UDP-N-acetyl-alpha-D-glucosamine is bound by residues Y362 and N373. Acetyl-CoA contacts are provided by residues A376, 382 to 383, S401, A419, and R436; that span reads NY.

This sequence in the N-terminal section; belongs to the N-acetylglucosamine-1-phosphate uridyltransferase family. The protein in the C-terminal section; belongs to the transferase hexapeptide repeat family. As to quaternary structure, homotrimer. It depends on Mg(2+) as a cofactor.

Its subcellular location is the cytoplasm. The enzyme catalyses alpha-D-glucosamine 1-phosphate + acetyl-CoA = N-acetyl-alpha-D-glucosamine 1-phosphate + CoA + H(+). It catalyses the reaction N-acetyl-alpha-D-glucosamine 1-phosphate + UTP + H(+) = UDP-N-acetyl-alpha-D-glucosamine + diphosphate. Its pathway is nucleotide-sugar biosynthesis; UDP-N-acetyl-alpha-D-glucosamine biosynthesis; N-acetyl-alpha-D-glucosamine 1-phosphate from alpha-D-glucosamine 6-phosphate (route II): step 2/2. It participates in nucleotide-sugar biosynthesis; UDP-N-acetyl-alpha-D-glucosamine biosynthesis; UDP-N-acetyl-alpha-D-glucosamine from N-acetyl-alpha-D-glucosamine 1-phosphate: step 1/1. The protein operates within bacterial outer membrane biogenesis; LPS lipid A biosynthesis. Catalyzes the last two sequential reactions in the de novo biosynthetic pathway for UDP-N-acetylglucosamine (UDP-GlcNAc). The C-terminal domain catalyzes the transfer of acetyl group from acetyl coenzyme A to glucosamine-1-phosphate (GlcN-1-P) to produce N-acetylglucosamine-1-phosphate (GlcNAc-1-P), which is converted into UDP-GlcNAc by the transfer of uridine 5-monophosphate (from uridine 5-triphosphate), a reaction catalyzed by the N-terminal domain. The protein is Bifunctional protein GlmU of Azoarcus sp. (strain BH72).